Reading from the N-terminus, the 488-residue chain is 3-octaprenyl-4-hydroxybenzoate carboxy-lyase (488 aa).

Asparagine 172 serves as a coordination point for Mn(2+). Prenylated FMN is bound by residues 175–177 (IYR), 189–191 (RWL), and 194–195 (RG). A Mn(2+)-binding site is contributed by glutamate 238. Aspartate 287 serves as the catalytic Proton donor.

This sequence belongs to the UbiD family. In terms of assembly, homohexamer. The cofactor is prenylated FMN. Mn(2+) is required as a cofactor.

The protein localises to the cell membrane. It carries out the reaction a 4-hydroxy-3-(all-trans-polyprenyl)benzoate + H(+) = a 2-(all-trans-polyprenyl)phenol + CO2. Its pathway is cofactor biosynthesis; ubiquinone biosynthesis. Catalyzes the decarboxylation of 3-octaprenyl-4-hydroxy benzoate to 2-octaprenylphenol, an intermediate step in ubiquinone biosynthesis. In Pseudomonas putida (strain W619), this protein is 3-octaprenyl-4-hydroxybenzoate carboxy-lyase.